The sequence spans 294 residues: Cytidine deaminase (294 aa).

CMP/dCMP-type deaminase domains lie at 48 to 168 (DEDA…FGPK) and 186 to 294 (VSGD…VLLG). A substrate-binding site is contributed by 89 to 91 (NME). His-102 lines the Zn(2+) pocket. Glu-104 functions as the Proton donor in the catalytic mechanism. Zn(2+)-binding residues include Cys-129 and Cys-132.

The protein belongs to the cytidine and deoxycytidylate deaminase family. Homodimer. The cofactor is Zn(2+).

It carries out the reaction cytidine + H2O + H(+) = uridine + NH4(+). The enzyme catalyses 2'-deoxycytidine + H2O + H(+) = 2'-deoxyuridine + NH4(+). This enzyme scavenges exogenous and endogenous cytidine and 2'-deoxycytidine for UMP synthesis. The chain is Cytidine deaminase from Klebsiella pneumoniae subsp. pneumoniae (strain ATCC 700721 / MGH 78578).